The sequence spans 342 residues: Glycerol-1-phosphate dehydrogenase [NAD(P)+] (342 aa).

Residues 84-88 (GRPID) and 106-109 (TSAS) contribute to the NAD(+) site. Aspartate 111 contributes to the substrate binding site. Position 115 (serine 115) interacts with NAD(+). Aspartate 160 lines the substrate pocket. Aspartate 160 and histidine 241 together coordinate Zn(2+). Histidine 245 provides a ligand contact to substrate. Histidine 260 lines the Zn(2+) pocket.

Belongs to the glycerol-1-phosphate dehydrogenase family. Homodimer. Zn(2+) serves as cofactor.

The protein localises to the cytoplasm. It catalyses the reaction sn-glycerol 1-phosphate + NAD(+) = dihydroxyacetone phosphate + NADH + H(+). The catalysed reaction is sn-glycerol 1-phosphate + NADP(+) = dihydroxyacetone phosphate + NADPH + H(+). Its pathway is membrane lipid metabolism; glycerophospholipid metabolism. In terms of biological role, catalyzes the NAD(P)H-dependent reduction of dihydroxyacetonephosphate (DHAP or glycerone phosphate) to glycerol 1-phosphate (G1P). The G1P thus generated is used as the glycerophosphate backbone of phospholipids in the cellular membranes of Archaea. The chain is Glycerol-1-phosphate dehydrogenase [NAD(P)+] from Pyrobaculum arsenaticum (strain DSM 13514 / JCM 11321 / PZ6).